Reading from the N-terminus, the 30-residue chain is LIM and SH3 domain protein 1 (30 aa).

Position 1 is an N-acetylmethionine (methionine 1). Residues cysteine 5–phenylalanine 30 form the LIM zinc-binding domain.

As to quaternary structure, interacts with F-actin. Interacts with ANKRD54. Interacts with KBTBD10. Post-translationally, phosphorylated.

The protein localises to the cytoplasm. It is found in the cell cortex. Its subcellular location is the cytoskeleton. In terms of biological role, plays an important role in the regulation of dynamic actin-based, cytoskeletal activities. Agonist-dependent changes in LASP1 phosphorylation may also serve to regulate actin-associated ion transport activities, not only in the parietal cell but also in certain other F-actin-rich secretory epithelial cell types. The polypeptide is LIM and SH3 domain protein 1 (LASP1) (Sus scrofa (Pig)).